Here is a 101-residue protein sequence, read N- to C-terminus: Small ribosomal subunit protein uS14 (101 aa).

The segment covering 1-10 (MAKKSSIEKN) has biased composition (basic and acidic residues). The segment at 1–24 (MAKKSSIEKNNRRKRLTKNAAPKR) is disordered. A compositionally biased stretch (basic residues) spans 11 to 24 (NRRKRLTKNAAPKR).

Belongs to the universal ribosomal protein uS14 family. In terms of assembly, part of the 30S ribosomal subunit. Contacts proteins S3 and S10.

Functionally, binds 16S rRNA, required for the assembly of 30S particles and may also be responsible for determining the conformation of the 16S rRNA at the A site. This Rhodopseudomonas palustris (strain BisB18) protein is Small ribosomal subunit protein uS14.